We begin with the raw amino-acid sequence, 536 residues long: MFS-type efflux pump MFS1 (536 aa).

A run of 3 helical transmembrane segments spans residues 30 to 50 (VTGLKLAVIVTGLCLSVLLVA), 80 to 100 (YLLTICAFQLIFGKIYTFFPV), and 102 to 122 (WVFLIAITIFEIGSAICGAAP). Asparagine 123 carries N-linked (GlcNAc...) asparagine glycosylation. Transmembrane regions (helical) follow at residues 133–153 (VAGIGSAGIFSGALIIIAYSI), 163–183 (GAIGGMYGIASVAGPLMGGAF), and 191–211 (WCFYINLPIGAVTILSILIFL). A glycan (N-linked (GlcNAc...) asparagine) is linked at asparagine 221. The next 8 membrane-spanning stretches (helical) occupy residues 234-254 (IGTAFFMPSIICLLLALQWGG), 264-284 (IIALFVVFAVLISGFIYFQIR), 306-326 (FFLFTIGSAFFIMVYYLPIWF), 342-362 (IPMVLSLVVLSIASGITVTAI), 366-386 (APLYYVSTVLTSIGAGLLTTF), 400-420 (IIFGAGVGTGLQLSIIAAQAV), 426-446 (VAVGTVIMMFCQTLGGALFVS), and 503-523 (TWYVATALAALSVIGSVGMEW).

The protein belongs to the major facilitator superfamily. TCR/Tet family.

The protein localises to the cell membrane. In terms of biological role, MFS-type efflux pump involved in the modulation susceptibility to azoles, including fluconazole, itraconazole, miconazole and voriconazole. Also confers increased resistance chloramphenicol and thiamphenicol, suggesting that it acts as a pleiotropic drug transporter with a broad substrate spectrum. Finally, increases the tolerance to cycloheximide when expressed in S.cerevisiae, but not in dermatophyte species. The chain is MFS-type efflux pump MFS1 from Arthroderma benhamiae (strain ATCC MYA-4681 / CBS 112371) (Trichophyton mentagrophytes).